The chain runs to 172 residues: Spore coat protein X (172 aa).

Its subcellular location is the spore coat. In Bacillus subtilis (strain 168), this protein is Spore coat protein X (cotX).